A 363-amino-acid polypeptide reads, in one-letter code: DNA primase small subunit PriS (363 aa).

Catalysis depends on residues Asp105, Asp107, and Asp265.

It belongs to the eukaryotic-type primase small subunit family. In terms of assembly, heterodimer of a small subunit (PriS) and a large subunit (PriL). Requires Mg(2+) as cofactor. Mn(2+) is required as a cofactor.

Functionally, catalytic subunit of DNA primase, an RNA polymerase that catalyzes the synthesis of short RNA molecules used as primers for DNA polymerase during DNA replication. The small subunit contains the primase catalytic core and has DNA synthesis activity on its own. Binding to the large subunit stabilizes and modulates the activity, increasing the rate of DNA synthesis while decreasing the length of the DNA fragments, and conferring RNA synthesis capability. The DNA polymerase activity may enable DNA primase to also catalyze primer extension after primer synthesis. May also play a role in DNA repair. The chain is DNA primase small subunit PriS from Methanococcus maripaludis (strain C7 / ATCC BAA-1331).